Here is a 78-residue protein sequence, read N- to C-terminus: HssA/B-like protein 30 (78 aa).

The tract at residues 1–32 (MTLFSSITSISKTNTSSKSSVNSLSGSSLSMG) is disordered.

Belongs to the hssA/B family.

The sequence is that of HssA/B-like protein 30 (hssl30) from Dictyostelium discoideum (Social amoeba).